Here is a 151-residue protein sequence, read N- to C-terminus: Ribonuclease H (151 aa).

The RNase H type-1 domain occupies 1–143; that stretch reads MYKKIEIFTD…CDQLARLAAK (143 aa). Asp10, Glu48, Asp70, and Asp135 together coordinate Mg(2+).

It belongs to the RNase H family. In terms of assembly, monomer. Mg(2+) serves as cofactor.

The protein localises to the cytoplasm. It catalyses the reaction Endonucleolytic cleavage to 5'-phosphomonoester.. In terms of biological role, endonuclease that specifically degrades the RNA of RNA-DNA hybrids. The protein is Ribonuclease H of Blochmanniella pennsylvanica (strain BPEN).